A 128-amino-acid polypeptide reads, in one-letter code: Histone H2A (128 aa).

It belongs to the histone H2A family. As to quaternary structure, the nucleosome is a histone octamer containing two molecules each of H2A, H2B, H3 and H4 assembled in one H3-H4 heterotetramer and two H2A-H2B heterodimers. The octamer wraps approximately 147 bp of DNA.

It is found in the nucleus. The protein localises to the chromosome. Functionally, core component of nucleosome. Nucleosomes wrap and compact DNA into chromatin, limiting DNA accessibility to the cellular machineries which require DNA as a template. Histones thereby play a central role in transcription regulation, DNA repair, DNA replication and chromosomal stability. DNA accessibility is regulated via a complex set of post-translational modifications of histones, also called histone code, and nucleosome remodeling. This chain is Histone H2A (HTA1), found in Encephalitozoon cuniculi (strain GB-M1) (Microsporidian parasite).